The chain runs to 343 residues: 2-deoxy-scyllo-inosamine dehydrogenase (343 aa).

Residues cysteine 37, histidine 59, cysteine 91, cysteine 94, cysteine 97, cysteine 105, and glutamate 146 each coordinate Zn(2+).

The protein belongs to the zinc-containing alcohol dehydrogenase family. DOIA dehydrogenase subfamily. Requires Zn(2+) as cofactor.

It carries out the reaction 2-deoxy-scyllo-inosamine + NADP(+) = 3-amino-2,3-dideoxy-scyllo-inosose + NADPH + H(+). The enzyme catalyses 2-deoxy-scyllo-inosamine + NAD(+) = 3-amino-2,3-dideoxy-scyllo-inosose + NADH + H(+). Its pathway is metabolic intermediate biosynthesis; 2-deoxystreptamine biosynthesis; 2-deoxystreptamine from D-glucose 6-phosphate: step 3/4. It participates in antibiotic biosynthesis; kanamycin biosynthesis. Catalyzes the oxidation of 2-deoxy-scyllo-inosamine (DOIA) with NAD(+) or NADP(+), forming 3-amino-2,3-dideoxy-scyllo-inosose (amino-DOI). This Streptomyces kanamyceticus protein is 2-deoxy-scyllo-inosamine dehydrogenase (kanE).